The following is a 117-amino-acid chain: Hainantoxin-XV-2 (117 aa).

The first 20 residues, 1 to 20 (MKLCAVIIASLLVCVAVASS), serve as a signal peptide directing secretion. Positions 20–55 (SSDNQKEFAQEKEMTREETQSLGEHEKDDEVTGSEE) are disordered. A propeptide spanning residues 21–56 (SDNQKEFAQEKEMTREETQSLGEHEKDDEVTGSEER) is cleaved from the precursor. Residues 23–55 (NQKEFAQEKEMTREETQSLGEHEKDDEVTGSEE) show a composition bias toward basic and acidic residues. 4 cysteine pairs are disulfide-bonded: Cys58-Cys72, Cys65-Cys78, Cys69-Cys115, and Cys71-Cys91.

Belongs to the neurotoxin 03 (Tx2) family. 02 subfamily. HNTX-XV sub-subfamily. In terms of tissue distribution, expressed by the venom gland.

The protein resides in the secreted. Putative ion channel inhibitor. This Cyriopagopus hainanus (Chinese bird spider) protein is Hainantoxin-XV-2.